We begin with the raw amino-acid sequence, 221 residues long: Ras-related protein RABA5a (221 aa).

G21–S28 contributes to the GTP binding site. Residues S43–F51 carry the Effector region motif. Residues D69–Q73, N127–D130, and S157–A158 each bind GTP. Residues C218 and C219 are each lipidated (S-geranylgeranyl cysteine).

The protein belongs to the small GTPase superfamily. Rab family.

It is found in the cell membrane. Functionally, intracellular vesicle trafficking and protein transport. The protein is Ras-related protein RABA5a (RABA5A) of Arabidopsis thaliana (Mouse-ear cress).